Here is a 162-residue protein sequence, read N- to C-terminus: NADH-quinone oxidoreductase subunit I (162 aa).

2 consecutive 4Fe-4S ferredoxin-type domains span residues 52 to 82 and 93 to 122; these read LRRY…IEAG and TRYD…EGPN. The [4Fe-4S] cluster site is built by Cys62, Cys65, Cys68, Cys72, Cys102, Cys105, Cys108, and Cys112.

The protein belongs to the complex I 23 kDa subunit family. As to quaternary structure, NDH-1 is composed of 14 different subunits. Subunits NuoA, H, J, K, L, M, N constitute the membrane sector of the complex. The cofactor is [4Fe-4S] cluster.

Its subcellular location is the cell inner membrane. The catalysed reaction is a quinone + NADH + 5 H(+)(in) = a quinol + NAD(+) + 4 H(+)(out). NDH-1 shuttles electrons from NADH, via FMN and iron-sulfur (Fe-S) centers, to quinones in the respiratory chain. The immediate electron acceptor for the enzyme in this species is believed to be ubiquinone. Couples the redox reaction to proton translocation (for every two electrons transferred, four hydrogen ions are translocated across the cytoplasmic membrane), and thus conserves the redox energy in a proton gradient. This chain is NADH-quinone oxidoreductase subunit I, found in Beijerinckia indica subsp. indica (strain ATCC 9039 / DSM 1715 / NCIMB 8712).